The primary structure comprises 528 residues: MPMSLGNAFIKNFLGKAPDWYKVAIIAFLIINPIVFFLIDPFVAGWLLVAEFIFTLAMALKCYPLQPGGLLAIEAVAIGMTSPAQVKHELVANIEVLLLLVFMVAGIYFMKQLLLFIFTKILLGIRSKTLLSLAFCFAAAFLSAFLDALTVIAVVISVAVGFYSIYHKVASGNPIGDHDHTQDDTITELTRDDLENYRAFLRSLLMHAGVGTALGGVTTMVGEPQNLIIADQAGWFFGEFLIRMAPVTLPVFFCGLITCAIVEKLKICGYGAQLPDNVRQILVDFDREERKTRTNQDVAKLWIQGLIAVWLIAALALHLAAVGLIGLSVIILATSFTGVIEEHSMGKAFEEALPFTALLAVFFAVVAVIIDQELFKPVIDAVLAVEDKSTQLALFYVANGLLSMVSDNVFVGTVYINEVKAALIDGQITREQFDLLAVAINTGTNLPSVATPNGQAAFLFLLTSALAPLIRLSYGRMVIMALPYTIVLAIVGLMGIMFFLEPATAFFYDAGWISPSSGDLAPVVSGGH.

11 consecutive transmembrane segments (helical) span residues 23 to 43 (VAII…DPFV), 45 to 65 (GWLL…CYPL), 90 to 110 (LVAN…IYFM), 136 to 156 (CFAA…AVVI), 204 to 224 (LLMH…VGEP), 242 to 262 (IRMA…CAIV), 305 to 325 (GLIA…VGLI), 350 to 370 (EEAL…AVII), 392 to 412 (LALF…VFVG), 450 to 470 (ATPN…APLI), and 479 to 499 (IMAL…IMFF).

The protein belongs to the NhaB Na(+)/H(+) (TC 2.A.34) antiporter family.

It localises to the cell inner membrane. The enzyme catalyses 2 Na(+)(in) + 3 H(+)(out) = 2 Na(+)(out) + 3 H(+)(in). Na(+)/H(+) antiporter that extrudes sodium in exchange for external protons. The protein is Na(+)/H(+) antiporter NhaB of Vibrio campbellii (strain ATCC BAA-1116).